A 58-amino-acid chain; its full sequence is Small ribosomal subunit protein bS21B (58 aa).

It belongs to the bacterial ribosomal protein bS21 family.

This Trichormus variabilis (strain ATCC 29413 / PCC 7937) (Anabaena variabilis) protein is Small ribosomal subunit protein bS21B.